A 398-amino-acid polypeptide reads, in one-letter code: 1-deoxy-D-xylulose 5-phosphate reductoisomerase (398 aa).

Residues T10, G11, S12, V13, G36, K37, N38, and N124 each contribute to the NADPH site. K125 is a 1-deoxy-D-xylulose 5-phosphate binding site. NADPH is bound at residue E126. Residue D150 participates in Mn(2+) binding. Residues S151, E152, S186, and H209 each coordinate 1-deoxy-D-xylulose 5-phosphate. E152 contributes to the Mn(2+) binding site. G215 is a binding site for NADPH. Positions 222, 227, 228, and 231 each coordinate 1-deoxy-D-xylulose 5-phosphate. Residue E231 participates in Mn(2+) binding.

This sequence belongs to the DXR family. As to quaternary structure, homodimer. Requires Mg(2+) as cofactor. The cofactor is Mn(2+).

It catalyses the reaction 2-C-methyl-D-erythritol 4-phosphate + NADP(+) = 1-deoxy-D-xylulose 5-phosphate + NADPH + H(+). The protein operates within isoprenoid biosynthesis; isopentenyl diphosphate biosynthesis via DXP pathway; isopentenyl diphosphate from 1-deoxy-D-xylulose 5-phosphate: step 1/6. Catalyzes the NADPH-dependent rearrangement and reduction of 1-deoxy-D-xylulose-5-phosphate (DXP) to 2-C-methyl-D-erythritol 4-phosphate (MEP). In Photorhabdus laumondii subsp. laumondii (strain DSM 15139 / CIP 105565 / TT01) (Photorhabdus luminescens subsp. laumondii), this protein is 1-deoxy-D-xylulose 5-phosphate reductoisomerase.